Here is a 160-residue protein sequence, read N- to C-terminus: tRNA (cytidine(34)-2'-O)-methyltransferase (160 aa).

Positions 78, 100, 122, and 130 each coordinate S-adenosyl-L-methionine.

The protein belongs to the class IV-like SAM-binding methyltransferase superfamily. RNA methyltransferase TrmH family. TrmL subfamily. As to quaternary structure, homodimer.

The protein localises to the cytoplasm. The catalysed reaction is cytidine(34) in tRNA + S-adenosyl-L-methionine = 2'-O-methylcytidine(34) in tRNA + S-adenosyl-L-homocysteine + H(+). It catalyses the reaction 5-carboxymethylaminomethyluridine(34) in tRNA(Leu) + S-adenosyl-L-methionine = 5-carboxymethylaminomethyl-2'-O-methyluridine(34) in tRNA(Leu) + S-adenosyl-L-homocysteine + H(+). Its function is as follows. Methylates the ribose at the nucleotide 34 wobble position in the two leucyl isoacceptors tRNA(Leu)(CmAA) and tRNA(Leu)(cmnm5UmAA). Catalyzes the methyl transfer from S-adenosyl-L-methionine to the 2'-OH of the wobble nucleotide. This is tRNA (cytidine(34)-2'-O)-methyltransferase from Haemophilus influenzae (strain ATCC 51907 / DSM 11121 / KW20 / Rd).